The primary structure comprises 94 residues: Large ribosomal subunit protein bL25 (94 aa).

It belongs to the bacterial ribosomal protein bL25 family. In terms of assembly, part of the 50S ribosomal subunit; part of the 5S rRNA/L5/L18/L25 subcomplex. Contacts the 5S rRNA. Binds to the 5S rRNA independently of L5 and L18.

In terms of biological role, this is one of the proteins that binds to the 5S RNA in the ribosome where it forms part of the central protuberance. The protein is Large ribosomal subunit protein bL25 of Edwardsiella ictaluri (strain 93-146).